The following is a 104-amino-acid chain: Large ribosomal subunit protein uL24 (104 aa).

It belongs to the universal ribosomal protein uL24 family. As to quaternary structure, part of the 50S ribosomal subunit.

One of two assembly initiator proteins, it binds directly to the 5'-end of the 23S rRNA, where it nucleates assembly of the 50S subunit. Functionally, one of the proteins that surrounds the polypeptide exit tunnel on the outside of the subunit. The sequence is that of Large ribosomal subunit protein uL24 from Cronobacter sakazakii (strain ATCC BAA-894) (Enterobacter sakazakii).